The chain runs to 138 residues: ATP synthase epsilon chain (138 aa).

It belongs to the ATPase epsilon chain family. As to quaternary structure, F-type ATPases have 2 components, CF(1) - the catalytic core - and CF(0) - the membrane proton channel. CF(1) has five subunits: alpha(3), beta(3), gamma(1), delta(1), epsilon(1). CF(0) has three main subunits: a, b and c.

The protein localises to the cell inner membrane. Produces ATP from ADP in the presence of a proton gradient across the membrane. This Geotalea uraniireducens (strain Rf4) (Geobacter uraniireducens) protein is ATP synthase epsilon chain.